A 141-amino-acid chain; its full sequence is Hemoglobin subunit alpha-1/2 (141 aa).

A Globin domain is found at V1–R141. S3 is subject to Phosphoserine. An N6-succinyllysine modification is found at K7. Position 8 is a phosphothreonine (T8). At K11 the chain carries N6-succinyllysine. K16 carries the post-translational modification N6-acetyllysine; alternate. Residue K16 is modified to N6-succinyllysine; alternate. The residue at position 24 (Y24) is a Phosphotyrosine. An N6-succinyllysine modification is found at K40. A Phosphoserine modification is found at S49. H58 contributes to the O2 binding site. H87 is a heme b binding site. S102 carries the phosphoserine modification. T108 bears the Phosphothreonine mark. Position 124 is a phosphoserine (S124). T134 and T137 each carry phosphothreonine. Residue S138 is modified to Phosphoserine.

The protein belongs to the globin family. Heterotetramer of two alpha chains and two beta chains. As to expression, red blood cells.

Its function is as follows. Involved in oxygen transport from the lung to the various peripheral tissues. The sequence is that of Hemoglobin subunit alpha-1/2 from Leptonychotes weddellii (Weddell seal).